A 190-amino-acid chain; its full sequence is Holliday junction branch migration complex subunit RuvA (190 aa).

Positions 1 to 64 are domain I; that stretch reads MIGKLTGTLL…EDAQLLYGFG (64 aa). Residues 65–143 are domain II; that stretch reads THSERQAFRE…ADTGAQSLFV (79 aa). A flexible linker region spans residues 144–148; it reads NNDQN. The segment at 148–190 is domain III; sequence NDIVQALMALGYSDKDAAAALKKLPPDVGVTEGIKLALKALAK.

It belongs to the RuvA family. As to quaternary structure, homotetramer. Forms an RuvA(8)-RuvB(12)-Holliday junction (HJ) complex. HJ DNA is sandwiched between 2 RuvA tetramers; dsDNA enters through RuvA and exits via RuvB. An RuvB hexamer assembles on each DNA strand where it exits the tetramer. Each RuvB hexamer is contacted by two RuvA subunits (via domain III) on 2 adjacent RuvB subunits; this complex drives branch migration. In the full resolvosome a probable DNA-RuvA(4)-RuvB(12)-RuvC(2) complex forms which resolves the HJ.

It is found in the cytoplasm. In terms of biological role, the RuvA-RuvB-RuvC complex processes Holliday junction (HJ) DNA during genetic recombination and DNA repair, while the RuvA-RuvB complex plays an important role in the rescue of blocked DNA replication forks via replication fork reversal (RFR). RuvA specifically binds to HJ cruciform DNA, conferring on it an open structure. The RuvB hexamer acts as an ATP-dependent pump, pulling dsDNA into and through the RuvAB complex. HJ branch migration allows RuvC to scan DNA until it finds its consensus sequence, where it cleaves and resolves the cruciform DNA. This is Holliday junction branch migration complex subunit RuvA from Delftia acidovorans (strain DSM 14801 / SPH-1).